We begin with the raw amino-acid sequence, 364 residues long: Cobalt-precorrin-5B C(1)-methyltransferase (364 aa).

It belongs to the CbiD family.

The catalysed reaction is Co-precorrin-5B + S-adenosyl-L-methionine = Co-precorrin-6A + S-adenosyl-L-homocysteine. It functions in the pathway cofactor biosynthesis; adenosylcobalamin biosynthesis; cob(II)yrinate a,c-diamide from sirohydrochlorin (anaerobic route): step 6/10. Functionally, catalyzes the methylation of C-1 in cobalt-precorrin-5B to form cobalt-precorrin-6A. The protein is Cobalt-precorrin-5B C(1)-methyltransferase of Pseudomonas putida (strain ATCC 700007 / DSM 6899 / JCM 31910 / BCRC 17059 / LMG 24140 / F1).